The sequence spans 662 residues: UvrABC system protein B (662 aa).

The 158-residue stretch at 31-188 (DNIEGGEKAQ…NDLVDIQFER (158 aa)) folds into the Helicase ATP-binding domain. Residue 44–51 (GATGTGKT) participates in ATP binding. Residues 97 to 120 (YYDYYQPEAYVPSSDTYIEKDSSV) carry the Beta-hairpin motif. In terms of domain architecture, Helicase C-terminal spans 435-601 (QIDDLLGEIN…TIKKEIRDLI (167 aa)). The UVR domain maps to 626–661 (KELVKKLEKQMQEAVEVLDFELAAQIRDMMLEVKAL).

It belongs to the UvrB family. In terms of assembly, forms a heterotetramer with UvrA during the search for lesions. Interacts with UvrC in an incision complex.

It localises to the cytoplasm. The UvrABC repair system catalyzes the recognition and processing of DNA lesions. A damage recognition complex composed of 2 UvrA and 2 UvrB subunits scans DNA for abnormalities. Upon binding of the UvrA(2)B(2) complex to a putative damaged site, the DNA wraps around one UvrB monomer. DNA wrap is dependent on ATP binding by UvrB and probably causes local melting of the DNA helix, facilitating insertion of UvrB beta-hairpin between the DNA strands. Then UvrB probes one DNA strand for the presence of a lesion. If a lesion is found the UvrA subunits dissociate and the UvrB-DNA preincision complex is formed. This complex is subsequently bound by UvrC and the second UvrB is released. If no lesion is found, the DNA wraps around the other UvrB subunit that will check the other stand for damage. This Streptococcus pneumoniae serotype 2 (strain D39 / NCTC 7466) protein is UvrABC system protein B.